Here is a 196-residue protein sequence, read N- to C-terminus: Imidazole glycerol phosphate synthase subunit HisH (196 aa).

The Glutamine amidotransferase type-1 domain maps to 2–196 (NVVILDTGCA…AKLLKNFLEM (195 aa)). The Nucleophile role is filled by C77. Residues H178 and E180 contribute to the active site.

In terms of assembly, heterodimer of HisH and HisF.

The protein localises to the cytoplasm. The catalysed reaction is 5-[(5-phospho-1-deoxy-D-ribulos-1-ylimino)methylamino]-1-(5-phospho-beta-D-ribosyl)imidazole-4-carboxamide + L-glutamine = D-erythro-1-(imidazol-4-yl)glycerol 3-phosphate + 5-amino-1-(5-phospho-beta-D-ribosyl)imidazole-4-carboxamide + L-glutamate + H(+). It carries out the reaction L-glutamine + H2O = L-glutamate + NH4(+). Its pathway is amino-acid biosynthesis; L-histidine biosynthesis; L-histidine from 5-phospho-alpha-D-ribose 1-diphosphate: step 5/9. Its function is as follows. IGPS catalyzes the conversion of PRFAR and glutamine to IGP, AICAR and glutamate. The HisH subunit catalyzes the hydrolysis of glutamine to glutamate and ammonia as part of the synthesis of IGP and AICAR. The resulting ammonia molecule is channeled to the active site of HisF. In Shigella flexneri, this protein is Imidazole glycerol phosphate synthase subunit HisH.